A 454-amino-acid chain; its full sequence is Light-independent protochlorophyllide reductase subunit N (454 aa).

[4Fe-4S] cluster-binding residues include Cys-22, Cys-47, and Cys-107.

The protein belongs to the BchN/ChlN family. As to quaternary structure, protochlorophyllide reductase is composed of three subunits; ChlL, ChlN and ChlB. Forms a heterotetramer of two ChlB and two ChlN subunits. Requires [4Fe-4S] cluster as cofactor.

It localises to the plastid. It is found in the chloroplast. It catalyses the reaction chlorophyllide a + oxidized 2[4Fe-4S]-[ferredoxin] + 2 ADP + 2 phosphate = protochlorophyllide a + reduced 2[4Fe-4S]-[ferredoxin] + 2 ATP + 2 H2O. It participates in porphyrin-containing compound metabolism; chlorophyll biosynthesis (light-independent). Functionally, component of the dark-operative protochlorophyllide reductase (DPOR) that uses Mg-ATP and reduced ferredoxin to reduce ring D of protochlorophyllide (Pchlide) to form chlorophyllide a (Chlide). This reaction is light-independent. The NB-protein (ChlN-ChlB) is the catalytic component of the complex. The polypeptide is Light-independent protochlorophyllide reductase subunit N (Cycas taitungensis (Prince sago)).